The chain runs to 767 residues: GPI ethanolamine phosphate transferase 2 (767 aa).

Asn186 and Asn401 each carry an N-linked (GlcNAc...) asparagine glycan. A run of 2 helical transmembrane segments spans residues 407–427 and 434–454; these read LGLF…YGLG and VTFL…SSYV. N-linked (GlcNAc...) asparagine glycosylation is present at Asn490. A run of 3 helical transmembrane segments spans residues 513 to 533, 538 to 558, and 595 to 615; these read ILWA…CLNS, IWRS…LVFV, and IPIF…KMSA. An N-linked (GlcNAc...) asparagine glycan is attached at Asn627. The next 3 membrane-spanning stretches (helical) occupy residues 655–675, 695–715, and 733–755; these read SVVL…IWWA, TLLT…CTML, and LAWT…SQVL.

It belongs to the PIGG/PIGN/PIGO family. PIGG subfamily.

It localises to the endoplasmic reticulum membrane. Its pathway is glycolipid biosynthesis; glycosylphosphatidylinositol-anchor biosynthesis. Ethanolamine phosphate transferase involved in glycosylphosphatidylinositol-anchor biosynthesis. Transfers ethanolamine phosphate to the GPI second mannose. This is GPI ethanolamine phosphate transferase 2 (las21) from Aspergillus fumigatus (strain ATCC MYA-4609 / CBS 101355 / FGSC A1100 / Af293) (Neosartorya fumigata).